Here is a 377-residue protein sequence, read N- to C-terminus: Protein RecA (377 aa).

82 to 89 (GPESSGKT) is an ATP binding site. Positions 345-377 (EGSEVSANSMRPLASAARQASSRPNLSQVSANG) are disordered. The segment covering 362–377 (RQASSRPNLSQVSANG) has biased composition (polar residues).

Belongs to the RecA family.

Its subcellular location is the cytoplasm. In terms of biological role, can catalyze the hydrolysis of ATP in the presence of single-stranded DNA, the ATP-dependent uptake of single-stranded DNA by duplex DNA, and the ATP-dependent hybridization of homologous single-stranded DNAs. It interacts with LexA causing its activation and leading to its autocatalytic cleavage. In Prochlorococcus marinus (strain NATL2A), this protein is Protein RecA.